The primary structure comprises 305 residues: Homoserine O-acetyltransferase (305 aa).

The Acyl-thioester intermediate role is filled by C142. K163 and S192 together coordinate substrate. The Proton acceptor role is filled by H235. E237 is an active-site residue. R249 is a binding site for substrate.

This sequence belongs to the MetA family.

The protein resides in the cytoplasm. It catalyses the reaction L-homoserine + acetyl-CoA = O-acetyl-L-homoserine + CoA. Its pathway is amino-acid biosynthesis; L-methionine biosynthesis via de novo pathway; O-acetyl-L-homoserine from L-homoserine: step 1/1. In terms of biological role, transfers an acetyl group from acetyl-CoA to L-homoserine, forming acetyl-L-homoserine. This Bacteroides fragilis (strain ATCC 25285 / DSM 2151 / CCUG 4856 / JCM 11019 / LMG 10263 / NCTC 9343 / Onslow / VPI 2553 / EN-2) protein is Homoserine O-acetyltransferase.